The following is a 296-amino-acid chain: 33 kDa chaperonin (296 aa).

Cystine bridges form between Cys-237–Cys-239 and Cys-270–Cys-273.

The protein belongs to the HSP33 family. Under oxidizing conditions two disulfide bonds are formed involving the reactive cysteines. Under reducing conditions zinc is bound to the reactive cysteines and the protein is inactive.

It localises to the cytoplasm. In terms of biological role, redox regulated molecular chaperone. Protects both thermally unfolding and oxidatively damaged proteins from irreversible aggregation. Plays an important role in the bacterial defense system toward oxidative stress. This is 33 kDa chaperonin from Acetivibrio thermocellus (strain ATCC 27405 / DSM 1237 / JCM 9322 / NBRC 103400 / NCIMB 10682 / NRRL B-4536 / VPI 7372) (Clostridium thermocellum).